We begin with the raw amino-acid sequence, 257 residues long: Dof zinc finger protein DOF5.3 (257 aa).

The tract at residues 23 to 50 is disordered; sequence LSYSSNPTPLDNDQKKPSPATAVTRPQP. Polar residues predominate over residues 24 to 33; sequence SYSSNPTPLD. The Dof-type zinc-finger motif lies at 55 to 109; sequence LRCPRCDSTNTKFCYYNNYSLTQPRYFCKSCRRYWTKGGTLRNIPVGGGCRKNKR. Zn(2+) contacts are provided by Cys57, Cys60, Cys82, and Cys85. The tract at residues 104 to 127 is disordered; it reads CRKNKRSTSSAARSLRTTPEPASH. The segment covering 110 to 121 has biased composition (low complexity); that stretch reads STSSAARSLRTT.

The PEAR proteins (e.g. DOF2.4, DOF5.1, DOF3.2, DOF1.1, DOF5.6 and DOF5.3) form a short-range concentration gradient that peaks at protophloem sieve elements (PSE). Accumulates in the stele.

The protein resides in the nucleus. In terms of biological role, transcription factor that binds specifically to a 5'-AA[AG]G-3' consensus core sequence. The PEAR proteins (e.g. DOF2.4, DOF5.1, DOF3.2, DOF1.1, DOF5.6 and DOF5.3) activate gene expression that promotes radial growth of protophloem sieve elements. In Arabidopsis thaliana (Mouse-ear cress), this protein is Dof zinc finger protein DOF5.3.